A 127-amino-acid polypeptide reads, in one-letter code: NADH-ubiquinone oxidoreductase chain 1 (127 aa).

3 helical membrane-spanning segments follow: residues 2–22, 71–91, and 100–120; these read LLLF…VALL, YLFY…WSII, and FNLS…SLLG.

Belongs to the complex I subunit 1 family.

It localises to the mitochondrion inner membrane. The enzyme catalyses a ubiquinone + NADH + 5 H(+)(in) = a ubiquinol + NAD(+) + 4 H(+)(out). Core subunit of the mitochondrial membrane respiratory chain NADH dehydrogenase (Complex I) that is believed to belong to the minimal assembly required for catalysis. Complex I functions in the transfer of electrons from NADH to the respiratory chain. The immediate electron acceptor for the enzyme is believed to be ubiquinone. This chain is NADH-ubiquinone oxidoreductase chain 1 (ND1), found in Asterias forbesi (Forbes' starfish).